Consider the following 484-residue polypeptide: Replication-associated protein (484 aa).

Positions 146 to 153 (IRKYHQSV) match the Nuclear localization signal motif.

The protein localises to the host nucleus. Plays an essential for the replication of viral DNA. Presumably cleaves viral genomic dsRNA replicative form to initiate rolling circle replication. This Chaetoceros (Chaetoceros sp. DNA virus 7) protein is Replication-associated protein.